The primary structure comprises 80 residues: Histone H1.M6.1 (80 aa).

Residues 1–80 (MSDAAVPPKK…KAVKKAPKKK (80 aa)) are disordered. The span at 11-80 (ASPKKAAAKK…KAVKKAPKKK (70 aa)) shows a compositional bias: basic residues.

The protein resides in the nucleus. It localises to the chromosome. The sequence is that of Histone H1.M6.1 from Trypanosoma cruzi.